The sequence spans 987 residues: ATP-dependent 6-phosphofructokinase subunit alpha (987 aa).

An N-terminal catalytic PFK domain 1 region spans residues 1 to 580 (MQSQDSCYGV…LYENFLSTTV (580 aa)). Phosphoserine is present on serine 3. Lysine 89 participates in a covalent cross-link: Glycyl lysine isopeptide (Lys-Gly) (interchain with G-Cter in ubiquitin). 5 positions are modified to phosphoserine: serine 166, serine 179, serine 185, serine 189, and serine 192. Glycine 215 contacts ATP. Serine 217 bears the Phosphoserine mark. ATP is bound by residues 278–279 (RS) and 308–311 (GDGS). Residue aspartate 309 coordinates Mg(2+). Residues 354–356 (SID), arginine 391, and 398–400 (MGR) contribute to the beta-D-fructose 6-phosphate site. The Proton acceptor role is filled by aspartate 356. The residue at position 450 (threonine 450) is a Phosphothreonine. Beta-D-fructose 6-phosphate is bound by residues glutamate 455, lysine 482, and 488 to 491 (HVQR). The tract at residues 581–594 (KDDGSELLPVSDRL) is interdomain linker. The segment at 595 to 987 (NIGIVHVGAP…EVAALAAENK (393 aa)) is C-terminal regulatory PFK domain 2. Lysine 625 participates in a covalent cross-link: Glycyl lysine isopeptide (Lys-Gly) (interchain with G-Cter in ubiquitin). Residues arginine 665, 722–726 (TVSNN), arginine 760, 767–769 (QGG), glutamate 827, arginine 853, 859–862 (HVQQ), and arginine 952 contribute to the beta-D-fructose 2,6-bisphosphate site.

This sequence belongs to the phosphofructokinase type A (PFKA) family. ATP-dependent PFK group I subfamily. Eukaryotic two domain clade 'E' sub-subfamily. In terms of assembly, heterooctamer of 4 alpha and 4 beta chains. Mg(2+) serves as cofactor.

The protein localises to the cytoplasm. Its subcellular location is the mitochondrion outer membrane. It carries out the reaction beta-D-fructose 6-phosphate + ATP = beta-D-fructose 1,6-bisphosphate + ADP + H(+). The protein operates within carbohydrate degradation; glycolysis; D-glyceraldehyde 3-phosphate and glycerone phosphate from D-glucose: step 3/4. Its activity is regulated as follows. Allosterically activated by ADP, AMP, or fructose 2,6-bisphosphate, and allosterically inhibited by ATP or citrate. Catalyzes the phosphorylation of D-fructose 6-phosphate to fructose 1,6-bisphosphate by ATP, the first committing step of glycolysis. This is ATP-dependent 6-phosphofructokinase subunit alpha (PFK1) from Saccharomyces cerevisiae (strain ATCC 204508 / S288c) (Baker's yeast).